A 258-amino-acid chain; its full sequence is Snake venom serine protease catroxase-2 (258 aa).

The signal sequence occupies residues 1–18 (MVLIRVLANLLILQLSYA). The propeptide occupies 19 to 24 (QKSSEL). The 225-residue stretch at 25–249 (VVGGDECNIN…YNDWIQSIIA (225 aa)) folds into the Peptidase S1 domain. Cystine bridges form between Cys-31-Cys-163, Cys-50-Cys-66, Cys-98-Cys-256, Cys-142-Cys-210, Cys-174-Cys-189, and Cys-200-Cys-225. Asn-44 carries N-linked (GlcNAc...) asparagine glycosylation. Residues His-65 and Asp-110 each act as charge relay system in the active site. Ser-204 functions as the Charge relay system in the catalytic mechanism.

It belongs to the peptidase S1 family. Snake venom subfamily. Monomer. Expressed by the venom gland.

The protein localises to the secreted. In terms of biological role, snake venom serine protease that may act in the hemostasis system of the prey. This is Snake venom serine protease catroxase-2 from Crotalus atrox (Western diamondback rattlesnake).